Consider the following 281-residue polypeptide: tRNA N(3)-cytidine methyltransferase METTL8, mitochondrial (281 aa).

The N-terminal 22 residues, 1–22 (MNVIWRSCICRLRQGKVPHRCQ), are a transit peptide targeting the mitochondrion. Lys-80 participates in a covalent cross-link: Glycyl lysine isopeptide (Lys-Gly) (interchain with G-Cter in SUMO). Trp-89 and Tyr-93 together coordinate S-adenosyl-L-methionine. The span at 139-151 (RTQGTETHCQESF) shows a compositional bias: polar residues. Positions 139-180 (RTQGTETHCQESFVSPEPGSRGRSAPDPDLEEYSKGPGKTEP) are disordered. S-adenosyl-L-methionine contacts are provided by Gly-194, Asp-220, and Asp-246.

It belongs to the methyltransferase superfamily. METL family. Interacts with EP300. In terms of tissue distribution, absent in embryonic lung but is induced in a fibroblast cell line by stretch. As to expression, expressed in undifferentiated progenitor cells, while its expression is inhibited by stretch. Absent in undifferentiated embryonic lung mesenchymal cells, but expression is induced by stretch. In terms of tissue distribution, expressed in mature adipose tissue.

The protein localises to the mitochondrion. Its subcellular location is the cytoplasm. It localises to the nucleus. It carries out the reaction cytidine(32) in tRNA(Ser) + S-adenosyl-L-methionine = N(3)-methylcytidine(32) in tRNA(Ser) + S-adenosyl-L-homocysteine + H(+). The catalysed reaction is cytidine(32) in tRNA(Thr) + S-adenosyl-L-methionine = N(3)-methylcytidine(32) in tRNA(Thr) + S-adenosyl-L-homocysteine + H(+). It catalyses the reaction a cytidine in mRNA + S-adenosyl-L-methionine = an N(3)-methylcytidine in mRNA + S-adenosyl-L-homocysteine + H(+). Mitochondrial S-adenosyl-L-methionine-dependent methyltransferase that mediates N(3)-methylcytidine modification of residue 32 of the tRNA anticodon loop of mitochondrial tRNA(Ser)(UCN) and tRNA(Thr). N(3)-methylcytidine methylation modification regulates mitochondrial translation efficiency and is required for activity of the respiratory chain. N(3)-methylcytidine methylation of mitochondrial tRNA(Ser)(UCN) requires the formation of N(6)-dimethylallyladenosine(37) (i6A37) by TRIT1 as prerequisite. May also mediate N(3)-methylcytidine modification of mRNAs. The existence of N(3)-methylcytidine modification on mRNAs is however unclear, and additional evidences are required to confirm the role of the N(3)-methylcytidine-specific mRNA methyltransferase activity of METTL8 in vivo. Functionally, overexpression in lung progenitor cells stimulates smooth muscle-specific gene expression and suppresses adipogenic gene expression. In terms of biological role, stimulates adipogenesis. The protein is tRNA N(3)-cytidine methyltransferase METTL8, mitochondrial of Mus musculus (Mouse).